Here is a 408-residue protein sequence, read N- to C-terminus: Argininosuccinate synthase (408 aa).

ATP contacts are provided by residues 12 to 20 and Ala39; that span reads AYSGGLDTS. Tyr90 and Ser95 together coordinate L-citrulline. ATP is bound at residue Gly120. L-aspartate-binding residues include Thr122, Asn126, and Asp127. Asn126 is a binding site for L-citrulline. L-citrulline contacts are provided by Arg130, Ser181, Ser190, Glu266, and Tyr278.

Belongs to the argininosuccinate synthase family. Type 1 subfamily. Homotetramer.

It localises to the cytoplasm. It carries out the reaction L-citrulline + L-aspartate + ATP = 2-(N(omega)-L-arginino)succinate + AMP + diphosphate + H(+). It participates in amino-acid biosynthesis; L-arginine biosynthesis; L-arginine from L-ornithine and carbamoyl phosphate: step 2/3. The chain is Argininosuccinate synthase from Methylococcus capsulatus (strain ATCC 33009 / NCIMB 11132 / Bath).